A 131-amino-acid polypeptide reads, in one-letter code: Profilin-5 (131 aa).

A disulfide bridge links C13 with C115. Positions 81–97 match the Involved in PIP2 interaction motif; it reads AVIRGKKGAGGITIKKT. T111 is modified (phosphothreonine).

Belongs to the profilin family. In terms of assembly, occurs in many kinds of cells as a complex with monomeric actin in a 1:1 ratio. Phosphorylated by MAP kinases.

The protein localises to the cytoplasm. It is found in the cytoskeleton. Its function is as follows. Binds to actin and affects the structure of the cytoskeleton. At high concentrations, profilin prevents the polymerization of actin, whereas it enhances it at low concentrations. In Phleum pratense (Common timothy), this protein is Profilin-5.